Here is a 351-residue protein sequence, read N- to C-terminus: Nicotinate-nucleotide--dimethylbenzimidazole phosphoribosyltransferase (351 aa).

Glutamate 313 functions as the Proton acceptor in the catalytic mechanism.

It belongs to the CobT family.

The catalysed reaction is 5,6-dimethylbenzimidazole + nicotinate beta-D-ribonucleotide = alpha-ribazole 5'-phosphate + nicotinate + H(+). It functions in the pathway nucleoside biosynthesis; alpha-ribazole biosynthesis; alpha-ribazole from 5,6-dimethylbenzimidazole: step 1/2. Catalyzes the synthesis of alpha-ribazole-5'-phosphate from nicotinate mononucleotide (NAMN) and 5,6-dimethylbenzimidazole (DMB). In Mycobacterium leprae (strain Br4923), this protein is Nicotinate-nucleotide--dimethylbenzimidazole phosphoribosyltransferase.